The following is a 355-amino-acid chain: D-alanine--D-alanine ligase (355 aa).

In terms of domain architecture, ATP-grasp spans 143–350; sequence KKIFSHLEIP…IDQLVAKLVD (208 aa). An ATP-binding site is contributed by 178–233; the sequence is IEKLKLPVFVKPANSGSSLGISKAKTRSEIIKALQKAWEIDSRIVIEEGLDVRELE. 3 residues coordinate Mg(2+): D303, E317, and N319.

Belongs to the D-alanine--D-alanine ligase family. It depends on Mg(2+) as a cofactor. Mn(2+) is required as a cofactor.

The protein resides in the cytoplasm. It carries out the reaction 2 D-alanine + ATP = D-alanyl-D-alanine + ADP + phosphate + H(+). It participates in cell wall biogenesis; peptidoglycan biosynthesis. Its function is as follows. Cell wall formation. The polypeptide is D-alanine--D-alanine ligase (Prochlorococcus marinus subsp. pastoris (strain CCMP1986 / NIES-2087 / MED4)).